The primary structure comprises 439 residues: MNIFEHNIKNVDKGNVVAIVGTQWGDEGKGKIIDMLSKYSNITCRFNGGGNAGHTICVGNKKHALHLLPCGVLYENNVNVLGNCMVIHLKTLMKEINNLGNNILDRIYISEKAHILFDIHQEIDAMQETRKSKDGNAIGTTKKGIGPCYSTKASRIGIRMGSLRNFENFKKLYTKLIDNLMELYNIKDYNKEEELNEFYTYHQILKDKIINIMLYINKSIDAKKYILIEGANAAMLDIDLGTYPFVTSSSTTIGGVFSGLGIHHKKLNLVVGVVKSYLTRVGSGPFLTEQCNEIGDYLTKKGFEYGTTTNRPRRCGWLDLPMLYYVKYINCIDIINLTKLDVLSGLKEIYICIDYKNKTTGELLEKGSYPLEEEQLREYEPVYEKFEGWDEDITNCLEFDQLPEKAKKYVLAIESYIKTPIVWIGVGPTRDHTITRKFD.

Residues 25-31 (GDEGKGK), 53-55 (GHT), and Lys62 contribute to the GTP site. Asp26 acts as the Proton acceptor in catalysis. Residues Asp26 and Gly53 each contribute to the Mg(2+) site. Residues 26–29 (DEGK) and 51–54 (NAGH) each bind IMP. Catalysis depends on His54, which acts as the Proton donor. Residues Thr141, Arg155, Asn232, and Thr247 each coordinate IMP. Thr307 provides a ligand contact to GTP. 307–313 (TTTNRPR) provides a ligand contact to substrate. Arg311 is a binding site for IMP. GTP contacts are provided by residues Arg313, 339–341 (KLD), and 425–427 (GVG).

This sequence belongs to the adenylosuccinate synthetase family. Homodimer. Requires Mg(2+) as cofactor.

The protein localises to the cytoplasm. It catalyses the reaction IMP + L-aspartate + GTP = N(6)-(1,2-dicarboxyethyl)-AMP + GDP + phosphate + 2 H(+). It participates in purine metabolism; AMP biosynthesis via de novo pathway; AMP from IMP: step 1/2. Functionally, plays an important role in the salvage pathway for purine nucleotide biosynthesis. Catalyzes the first commited step in the biosynthesis of AMP from IMP. The polypeptide is Adenylosuccinate synthetase (Plasmodium chabaudi chabaudi).